The sequence spans 249 residues: 5'-nucleotidase SurE (249 aa).

The a divalent metal cation site is built by Asp8, Asp9, Ser39, and Asn91.

Belongs to the SurE nucleotidase family. It depends on a divalent metal cation as a cofactor.

It is found in the cytoplasm. The catalysed reaction is a ribonucleoside 5'-phosphate + H2O = a ribonucleoside + phosphate. In terms of biological role, nucleotidase that shows phosphatase activity on nucleoside 5'-monophosphates. This is 5'-nucleotidase SurE from Pseudomonas aeruginosa (strain UCBPP-PA14).